The following is a 266-amino-acid chain: Calpain small subunit 1 (266 aa).

Met1 carries the post-translational modification N-acetylmethionine. Position 6 is a phosphoserine (Ser6). An EF-hand 1; atypical domain is found at 94–128 (EEVRQFRRLFAQLAGDDMEVSATELMNILNKVVTR). Ca(2+) is bound by residues Ala107, Asp110, Glu112, Glu117, Asp135, Asp150, Asp152, Thr154, Lys156, and Glu161. 4 EF-hand domains span residues 137 to 170 (FGLDTCRSMVAVMDSDTTGKLGFEEFKYLWNNIK), 167 to 202 (NNIKKWQAIYKQFDVDRSGTICSRELPGAFEAAGFH), 203 to 231 (LNEHLYNMIIRRYSDEAGNMDFDNFISCL), and 232 to 266 (VRLDAMFRAFKSLDKDGTGQIQVNIQEWLQLTMYS). The residue at position 177 (Lys177) is an N6-acetyllysine. The Ca(2+) site is built by Asp180, Asp182, Ser184, Thr186, Glu191, and Asp223.

Homodimer or heterodimer of a large (catalytic) and a small (regulatory) subunit. In presence of calcium, the heterodimer dissociates. In terms of processing, the N-terminus is blocked.

The protein resides in the cytoplasm. It is found in the cell membrane. Its function is as follows. Regulatory subunit of the calcium-regulated non-lysosomal thiol-protease which catalyzes limited proteolysis of substrates involved in cytoskeletal remodeling and signal transduction. Essential for embryonic development. The polypeptide is Calpain small subunit 1 (CAPNS1) (Oryctolagus cuniculus (Rabbit)).